A 293-amino-acid chain; its full sequence is Glycine--tRNA ligase alpha subunit (293 aa).

Belongs to the class-II aminoacyl-tRNA synthetase family. As to quaternary structure, tetramer of two alpha and two beta subunits.

Its subcellular location is the cytoplasm. The catalysed reaction is tRNA(Gly) + glycine + ATP = glycyl-tRNA(Gly) + AMP + diphosphate. This chain is Glycine--tRNA ligase alpha subunit, found in Prochlorococcus marinus (strain MIT 9211).